A 433-amino-acid chain; its full sequence is Glucose-1-phosphate adenylyltransferase (433 aa).

Alpha-D-glucose 1-phosphate is bound by residues Tyr117, Gly182, 197–198 (EK), and Ser215.

Belongs to the bacterial/plant glucose-1-phosphate adenylyltransferase family. Homotetramer.

It carries out the reaction alpha-D-glucose 1-phosphate + ATP + H(+) = ADP-alpha-D-glucose + diphosphate. The protein operates within glycan biosynthesis; glycogen biosynthesis. Involved in the biosynthesis of ADP-glucose, a building block required for the elongation reactions to produce glycogen. Catalyzes the reaction between ATP and alpha-D-glucose 1-phosphate (G1P) to produce pyrophosphate and ADP-Glc. The polypeptide is Glucose-1-phosphate adenylyltransferase (Nitrosomonas europaea (strain ATCC 19718 / CIP 103999 / KCTC 2705 / NBRC 14298)).